The following is a 427-amino-acid chain: Thymidine phosphorylase (427 aa).

It belongs to the thymidine/pyrimidine-nucleoside phosphorylase family. As to quaternary structure, homodimer.

The enzyme catalyses thymidine + phosphate = 2-deoxy-alpha-D-ribose 1-phosphate + thymine. The enzymes which catalyze the reversible phosphorolysis of pyrimidine nucleosides are involved in the degradation of these compounds and in their utilization as carbon and energy sources, or in the rescue of pyrimidine bases for nucleotide synthesis. This Mycobacterium tuberculosis (strain CDC 1551 / Oshkosh) protein is Thymidine phosphorylase (deoA).